Here is a 1014-residue protein sequence, read N- to C-terminus: Calcium-transporting ATPase 2, plasma membrane-type (1014 aa).

An N-acetylmethionine modification is found at M1. Residues M1–G160 are Cytoplasmic-facing. The interaction with calmodulin stretch occupies residues V20 to V31. S45 bears the Phosphoserine; by CPK1 mark. Residues F161–A181 form a helical membrane-spanning segment. The Lumenal portion of the chain corresponds to F182 to H199. A helical membrane pass occupies residues D200–Y220. The Cytoplasmic segment spans residues R221–L348. A helical membrane pass occupies residues N349 to A368. Residues V369–Y398 lie on the Lumenal side of the membrane. Residues F399–L416 form a helical membrane-spanning segment. Over A417–I810 the chain is Cytoplasmic. D454 acts as the 4-aspartylphosphate intermediate in catalysis. The Mg(2+) site is built by D755 and D759. The chain crosses the membrane as a helical span at residues Q811–F829. At S830–L840 the chain is on the lumenal side. The helical transmembrane segment at T841–A861 threads the bilayer. Residues T862–F881 lie on the Cytoplasmic side of the membrane. Residues I882–L904 form a helical membrane-spanning segment. Over Q905–G916 the chain is Lumenal. The helical transmembrane segment at P917–N938 threads the bilayer. The Cytoplasmic portion of the chain corresponds to E939 to D956. The helical transmembrane segment at N957–L978 threads the bilayer. The Lumenal segment spans residues G979–T988. Residues I989–K1010 traverse the membrane as a helical segment. The Cytoplasmic segment spans residues T1011–V1014.

Belongs to the cation transport ATPase (P-type) (TC 3.A.3) family. Type IIB subfamily.

Its subcellular location is the endoplasmic reticulum membrane. It carries out the reaction Ca(2+)(in) + ATP + H2O = Ca(2+)(out) + ADP + phosphate + H(+). With respect to regulation, activated by calmodulin. Its function is as follows. This magnesium-dependent enzyme catalyzes the hydrolysis of ATP coupled with the translocation of calcium from the cytosol into the endoplasmic reticulum. This chain is Calcium-transporting ATPase 2, plasma membrane-type (ACA2), found in Arabidopsis thaliana (Mouse-ear cress).